An 87-amino-acid polypeptide reads, in one-letter code: Small ribosomal subunit protein uS17 (87 aa).

Belongs to the universal ribosomal protein uS17 family. As to quaternary structure, part of the 30S ribosomal subunit.

Its function is as follows. One of the primary rRNA binding proteins, it binds specifically to the 5'-end of 16S ribosomal RNA. This Aster yellows witches'-broom phytoplasma (strain AYWB) protein is Small ribosomal subunit protein uS17.